A 396-amino-acid chain; its full sequence is Ribosomal RNA large subunit methyltransferase I (396 aa).

In terms of domain architecture, PUA spans 2–81 (SVRLVLAKGR…ESIDIAFFTR (80 aa)).

The protein belongs to the methyltransferase superfamily. RlmI family.

Its subcellular location is the cytoplasm. The catalysed reaction is cytidine(1962) in 23S rRNA + S-adenosyl-L-methionine = 5-methylcytidine(1962) in 23S rRNA + S-adenosyl-L-homocysteine + H(+). Specifically methylates the cytosine at position 1962 (m5C1962) of 23S rRNA. In Escherichia coli O127:H6 (strain E2348/69 / EPEC), this protein is Ribosomal RNA large subunit methyltransferase I.